A 288-amino-acid polypeptide reads, in one-letter code: Peroxisomal protein PEX21 (288 aa).

Residue Cys5 forms a Glycyl cysteine thioester (Cys-Gly) (interchain with G-Cter in ubiquitin) linkage.

Belongs to the peroxin-21 family. In terms of assembly, interacts with PEX7. Interacts with PEX13. Interacts with SES1. Post-translationally, monoubiquitinated at Cys-5; acts as a signal for PEX21 extraction and is required for proper export from peroxisomes and recycling.

The protein localises to the cytoplasm. It is found in the cytosol. Its subcellular location is the peroxisome. Receptor that mediates peroxisomal import of proteins containing a C-terminal PTS2-type peroxisomal targeting signal via its interaction with PEX7. Interaction with PEX7 only takes place when PEX7 is associated with cargo proteins containing a PTS2 peroxisomal targeting signal. PEX7 along with PTS2-containing cargo proteins are then translocated through the PEX13-PEX14 docking complex together with PEX21. Acts as an activator of the seryl-tRNA synthetase SES1 by increasing its binding to tRNA. The polypeptide is Peroxisomal protein PEX21 (PEX21) (Saccharomyces cerevisiae (strain ATCC 204508 / S288c) (Baker's yeast)).